A 58-amino-acid chain; its full sequence is Large ribosomal subunit protein bL32 (58 aa).

Residues methionine 1 to glutamine 15 are compositionally biased toward basic residues. Residues methionine 1–lysine 23 are disordered.

Belongs to the bacterial ribosomal protein bL32 family.

The chain is Large ribosomal subunit protein bL32 from Parasynechococcus marenigrum (strain WH8102).